The chain runs to 443 residues: Protein Z-dependent protease inhibitor (443 aa).

The signal sequence occupies residues 1–23 (MKVVPSLLLSVLLAQVWLVPGLA). The segment at 24-66 (PSPQSPETPAPQNQTSRVVQAPREEEEDEQEASEEKAGDEEKA) is disordered. N-linked (GlcNAc...) asparagine glycosylation occurs at asparagine 36. Phosphoserine is present on serine 56. Over residues 56–66 (SEEKAGDEEKA) the composition is skewed to basic and acidic residues. The heparin-binding stretch occupies residues 136-153 (TKPGLLPSLFKGLRETLS). Residues asparagine 180 and asparagine 295 are each glycosylated (N-linked (GlcNAc...) asparagine).

The protein belongs to the serpin family. Post-translationally, phosphorylated by FAM20C in the extracellular medium.

Its subcellular location is the secreted. Functionally, inhibits activity of the coagulation protease factor Xa in the presence of PROZ, calcium and phospholipids. Also inhibits factor XIa in the absence of cofactors. This Pongo abelii (Sumatran orangutan) protein is Protein Z-dependent protease inhibitor (SERPINA10).